The chain runs to 418 residues: Tyrosine--tRNA ligase (418 aa).

Tyr34 is an L-tyrosine binding site. Residues 39-48 (PTADSLHLGH) carry the 'HIGH' region motif. L-tyrosine-binding residues include Tyr169 and Gln173. The 'KMSKS' region signature appears at 229 to 233 (KFGKS). Lys232 contributes to the ATP binding site. Residues 352 to 418 (NNIVELLVSS…GKKKYFVLTY (67 aa)) enclose the S4 RNA-binding domain.

The protein belongs to the class-I aminoacyl-tRNA synthetase family. TyrS type 1 subfamily. Homodimer.

Its subcellular location is the cytoplasm. It carries out the reaction tRNA(Tyr) + L-tyrosine + ATP = L-tyrosyl-tRNA(Tyr) + AMP + diphosphate + H(+). Its function is as follows. Catalyzes the attachment of tyrosine to tRNA(Tyr) in a two-step reaction: tyrosine is first activated by ATP to form Tyr-AMP and then transferred to the acceptor end of tRNA(Tyr). This is Tyrosine--tRNA ligase from Streptococcus pneumoniae (strain CGSP14).